The sequence spans 314 residues: Glycine--tRNA ligase alpha subunit (314 aa).

The protein belongs to the class-II aminoacyl-tRNA synthetase family. Tetramer of two alpha and two beta subunits.

It is found in the cytoplasm. It catalyses the reaction tRNA(Gly) + glycine + ATP = glycyl-tRNA(Gly) + AMP + diphosphate. The chain is Glycine--tRNA ligase alpha subunit from Leuconostoc citreum (strain KM20).